The primary structure comprises 175 residues: ATP synthase subunit b (175 aa).

Residues 13–33 traverse the membrane as a helical segment; the sequence is LLSPNPGLIFWTAVTFLLLLL.

This sequence belongs to the ATPase B chain family. As to quaternary structure, F-type ATPases have 2 components, F(1) - the catalytic core - and F(0) - the membrane proton channel. F(1) has five subunits: alpha(3), beta(3), gamma(1), delta(1), epsilon(1). F(0) has four main subunits: a(1), b(2) and c(10-14). The alpha and beta chains form an alternating ring which encloses part of the gamma chain. F(1) is attached to F(0) by a central stalk formed by the gamma and epsilon chains, while a peripheral stalk is formed by the delta and b chains.

The protein localises to the cell inner membrane. In terms of biological role, f(1)F(0) ATP synthase produces ATP from ADP in the presence of a proton or sodium gradient. F-type ATPases consist of two structural domains, F(1) containing the extramembraneous catalytic core and F(0) containing the membrane proton channel, linked together by a central stalk and a peripheral stalk. During catalysis, ATP synthesis in the catalytic domain of F(1) is coupled via a rotary mechanism of the central stalk subunits to proton translocation. Its function is as follows. Component of the F(0) channel, it forms part of the peripheral stalk, linking F(1) to F(0). This Chloroherpeton thalassium (strain ATCC 35110 / GB-78) protein is ATP synthase subunit b.